Reading from the N-terminus, the 659-residue chain is uncharacterized protein (659 aa).

The signal sequence occupies residues 1–25; it reads MVKRRLSAFGNAFLIYFIIFRLCCC. The Lumenal portion of the chain corresponds to 26–556; it reads SPQTSHWCKY…LYQESSFQKR (531 aa). Asparagine 94, asparagine 111, asparagine 128, and asparagine 142 each carry an N-linked (GlcNAc...) asparagine glycan. The 163-residue stretch at 173–335 folds into the SUN domain; that stretch reads AATIDSNIDE…SLLRVYGKTM (163 aa). N-linked (GlcNAc...) asparagine glycosylation is found at asparagine 393 and asparagine 415. The segment at 417–445 is disordered; it reads TGKSESYPATSTRSFNDISPSSSSSYSTA. A compositionally biased stretch (polar residues) spans 423-434; that stretch reads YPATSTRSFNDI. Residues asparagine 495 and asparagine 504 are each glycosylated (N-linked (GlcNAc...) asparagine). A helical membrane pass occupies residues 557–574; sequence LLMLQLTVLIVLTVYMAV. The Cytoplasmic portion of the chain corresponds to 575–659; sequence SRLPENLPTT…IIHSRSHSVC (85 aa). 2 disordered regions span residues 580–603 and 632–659; these read NLPTTRSSSNNPIEASRPPFSRDE and KRDPNTSIRSIHEREQDKIIHSRSHSVC. Positions 581-592 are enriched in polar residues; the sequence is LPTTRSSSNNPI. Residues 641–651 show a composition bias toward basic and acidic residues; sequence SIHEREQDKII.

This sequence belongs to the SLP1 family. Interacts with EMP65.

The protein localises to the endoplasmic reticulum membrane. Its function is as follows. May be involved in membrane protein folding. This is an uncharacterized protein from Schizosaccharomyces pombe (strain 972 / ATCC 24843) (Fission yeast).